Here is a 546-residue protein sequence, read N- to C-terminus: Chaperonin GroEL (546 aa).

ATP is bound by residues 30–33 (TLGP), Lys-51, 87–91 (DGTTT), Gly-415, 479–481 (NAA), and Asp-495.

Belongs to the chaperonin (HSP60) family. As to quaternary structure, forms a cylinder of 14 subunits composed of two heptameric rings stacked back-to-back. Interacts with the co-chaperonin GroES.

The protein resides in the cytoplasm. The catalysed reaction is ATP + H2O + a folded polypeptide = ADP + phosphate + an unfolded polypeptide.. Together with its co-chaperonin GroES, plays an essential role in assisting protein folding. The GroEL-GroES system forms a nano-cage that allows encapsulation of the non-native substrate proteins and provides a physical environment optimized to promote and accelerate protein folding. The polypeptide is Chaperonin GroEL (Pseudomonas entomophila (strain L48)).